Reading from the N-terminus, the 332-residue chain is Cytoplasmic phosphatidylinositol transfer protein 1 (332 aa).

4 positions are modified to phosphoserine: S119, S122, S270, and S274. Residues 272 to 281 (PSSAPSTPLS) are compositionally biased toward low complexity. A disordered region spans residues 272-332 (PSSAPSTPLS…SEKPCRPKSE (61 aa)). T278 is subject to Phosphothreonine.

It belongs to the PtdIns transfer protein family. PI transfer class IIB subfamily. As to expression, widely expressed in brain, with expression in the gray matters of pre- and postnatal brains. In terms of tissue distribution, weakly expressed in brain and is rather confined to the embryonic stage.

It is found in the cytoplasm. It localises to the nucleus. The catalysed reaction is a 1,2-diacyl-sn-glycero-3-phospho-(1D-myo-inositol)(in) = a 1,2-diacyl-sn-glycero-3-phospho-(1D-myo-inositol)(out). It catalyses the reaction a 1,2-diacyl-sn-glycero-3-phosphate(in) = a 1,2-diacyl-sn-glycero-3-phosphate(out). Functionally, catalyzes the transfer of phosphatidylinositol (PI) and phosphatidic acid (PA) between membranes. Binds PA derived from the phospholipase D signaling pathway and among the cellular PA species, preferably binds to the C16:0/16:1 and C16:1/18:1 PA species. Its function is as follows. Specifically binds to phosphatidylinositol but not to other phospholipids and may play a role in the phosphoinositide-mediated signaling in the neural development. The sequence is that of Cytoplasmic phosphatidylinositol transfer protein 1 (Pitpnc1) from Mus musculus (Mouse).